We begin with the raw amino-acid sequence, 269 residues long: GTP cyclohydrolase FolE2 (269 aa).

The protein belongs to the GTP cyclohydrolase IV family.

The catalysed reaction is GTP + H2O = 7,8-dihydroneopterin 3'-triphosphate + formate + H(+). It functions in the pathway cofactor biosynthesis; 7,8-dihydroneopterin triphosphate biosynthesis; 7,8-dihydroneopterin triphosphate from GTP: step 1/1. Its function is as follows. Converts GTP to 7,8-dihydroneopterin triphosphate. The chain is GTP cyclohydrolase FolE2 from Burkholderia ambifaria (strain ATCC BAA-244 / DSM 16087 / CCUG 44356 / LMG 19182 / AMMD) (Burkholderia cepacia (strain AMMD)).